The primary structure comprises 495 residues: Internal alternative NAD(P)H-ubiquinone oxidoreductase A1, mitochondrial (495 aa).

A mitochondrion-targeting transit peptide spans Met-1–Gln-41. Arg-61–Arg-91 contributes to the FAD binding site. Residue Leu-228 to Tyr-264 participates in NAD(+) binding. The Microbody targeting signal signature appears at Leu-486 to Ile-495.

The protein belongs to the NADH dehydrogenase family. FAD serves as cofactor.

The protein localises to the mitochondrion inner membrane. It localises to the peroxisome. The catalysed reaction is a quinone + NADH + H(+) = a quinol + NAD(+). The enzyme catalyses a ubiquinone + NADH + H(+) = a ubiquinol + NAD(+). Functionally, alternative NADH-ubiquinone oxidoreductase which catalyzes the oxidation of mitochondrial NADH does not translocate protons across the inner mitochondrial membrane. This Solanum tuberosum (Potato) protein is Internal alternative NAD(P)H-ubiquinone oxidoreductase A1, mitochondrial (NDA1).